A 126-amino-acid polypeptide reads, in one-letter code: Small ribosomal subunit protein uS13 (126 aa).

The tract at residues 98–126 (VRGQSTKNNARTRKGKRKTVANKKKAAKK) is disordered. Basic residues predominate over residues 107–126 (ARTRKGKRKTVANKKKAAKK).

It belongs to the universal ribosomal protein uS13 family. Part of the 30S ribosomal subunit. Forms a loose heterodimer with protein S19. Forms two bridges to the 50S subunit in the 70S ribosome.

Located at the top of the head of the 30S subunit, it contacts several helices of the 16S rRNA. In the 70S ribosome it contacts the 23S rRNA (bridge B1a) and protein L5 of the 50S subunit (bridge B1b), connecting the 2 subunits; these bridges are implicated in subunit movement. Contacts the tRNAs in the A and P-sites. This Amoebophilus asiaticus (strain 5a2) protein is Small ribosomal subunit protein uS13.